We begin with the raw amino-acid sequence, 412 residues long: Argininosuccinate synthase (412 aa).

Residues 15–23 (AYSGGLDTS) and Ala42 contribute to the ATP site. L-citrulline contacts are provided by Tyr93 and Ser98. Gly123 provides a ligand contact to ATP. L-aspartate is bound by residues Thr125, Asn129, and Asp130. Asn129 is a binding site for L-citrulline. The L-citrulline site is built by Arg133, Ser185, Ser194, Glu270, and Tyr282.

It belongs to the argininosuccinate synthase family. Type 1 subfamily. As to quaternary structure, homotetramer.

The protein localises to the cytoplasm. The enzyme catalyses L-citrulline + L-aspartate + ATP = 2-(N(omega)-L-arginino)succinate + AMP + diphosphate + H(+). It functions in the pathway amino-acid biosynthesis; L-arginine biosynthesis; L-arginine from L-ornithine and carbamoyl phosphate: step 2/3. The polypeptide is Argininosuccinate synthase (Psychrobacter arcticus (strain DSM 17307 / VKM B-2377 / 273-4)).